The following is a 342-amino-acid chain: MLHEIPKSEILKELKRIGAKRVLIQSPEGLRREAEELAGFLEENNIEVFLHGEINYGACDPADREAKLVGCDALIHLGHSYMKLPLEVPTIFVPAFARVSVVEALKENIGEIKKLGRKIIVTTTAQHIHQLKEAKEFLESEGFEVSIGRGDSRISWPGQVLGCNYSVAKVRGEGILFIGSGIFHPLGLAVATRKKVLAIDPYTKAFSWIDPERFIRKRWAQIAKAMDAKKFGVIVSIKKGQLRLAEAKRIVKLLKKHGREARLIVMNDVNYHKLEGFPFEAYVVVACPRVPLDDYGAWRKPVLTPKEVEILLGLREEYEFDEILGGPRESDEPFGISIHSTR.

[4Fe-4S] cluster contacts are provided by cysteine 59, cysteine 163, and cysteine 287.

It belongs to the DPH1/DPH2 family. Homodimer. It depends on [4Fe-4S] cluster as a cofactor.

The enzyme catalyses L-histidyl-[translation elongation factor 2] + S-adenosyl-L-methionine = 2-[(3S)-amino-3-carboxypropyl]-L-histidyl-[translation elongation factor 2] + S-methyl-5'-thioadenosine + H(+). It functions in the pathway protein modification; peptidyl-diphthamide biosynthesis. Its function is as follows. Catalyzes the first step of diphthamide biosynthesis, i.e. the transfer of the 3-amino-3-carboxypropyl group from S-adenosyl-L-methionine (SAM) to the C2 position of the imidazole ring of the target histidine residue in translation elongation factor 2 (EF-2). The polypeptide is 2-(3-amino-3-carboxypropyl)histidine synthase (dph2) (Pyrococcus horikoshii (strain ATCC 700860 / DSM 12428 / JCM 9974 / NBRC 100139 / OT-3)).